The sequence spans 504 residues: Glutamate--tRNA ligase (504 aa).

Residues 25–35 (PSPTGNPHVGL) carry the 'HIGH' region motif. Residues Cys122, Cys124, Cys149, and Asp151 each contribute to the Zn(2+) site. A 'KMSKS' region motif is present at residues 270 to 274 (KLSKR). Lys273 is an ATP binding site.

Belongs to the class-I aminoacyl-tRNA synthetase family. Glutamate--tRNA ligase type 1 subfamily. In terms of assembly, monomer. Requires Zn(2+) as cofactor.

It localises to the cytoplasm. It carries out the reaction tRNA(Glu) + L-glutamate + ATP = L-glutamyl-tRNA(Glu) + AMP + diphosphate. Functionally, catalyzes the attachment of glutamate to tRNA(Glu) in a two-step reaction: glutamate is first activated by ATP to form Glu-AMP and then transferred to the acceptor end of tRNA(Glu). The chain is Glutamate--tRNA ligase from Streptomyces griseus subsp. griseus (strain JCM 4626 / CBS 651.72 / NBRC 13350 / KCC S-0626 / ISP 5235).